Reading from the N-terminus, the 238-residue chain is Ribonuclease PH (238 aa).

Phosphate is bound by residues Arg-86 and 124 to 126 (GTR).

Belongs to the RNase PH family. Homohexameric ring arranged as a trimer of dimers.

The catalysed reaction is tRNA(n+1) + phosphate = tRNA(n) + a ribonucleoside 5'-diphosphate. Functionally, phosphorolytic 3'-5' exoribonuclease that plays an important role in tRNA 3'-end maturation. Removes nucleotide residues following the 3'-CCA terminus of tRNAs; can also add nucleotides to the ends of RNA molecules by using nucleoside diphosphates as substrates, but this may not be physiologically important. Probably plays a role in initiation of 16S rRNA degradation (leading to ribosome degradation) during starvation. The polypeptide is Ribonuclease PH (Rhizobium rhizogenes (strain K84 / ATCC BAA-868) (Agrobacterium radiobacter)).